We begin with the raw amino-acid sequence, 495 residues long: Membrane-bound lytic murein transglycosylase F (495 aa).

A signal peptide spans 1-30 (MSRIRHHRFIQSCLVISTLLITLTGCQVES). The interval 31 to 270 (EPKTKLEQIR…LLEEKYFGHV (240 aa)) is non-LT domain. The LT domain stretch occupies residues 272-495 (SFDYVDTRAF…SVSQAIETKK (224 aa)). Glu315 is an active-site residue.

In the N-terminal section; belongs to the bacterial solute-binding protein 3 family. This sequence in the C-terminal section; belongs to the transglycosylase Slt family.

It is found in the cell outer membrane. It catalyses the reaction Exolytic cleavage of the (1-&gt;4)-beta-glycosidic linkage between N-acetylmuramic acid (MurNAc) and N-acetylglucosamine (GlcNAc) residues in peptidoglycan, from either the reducing or the non-reducing ends of the peptidoglycan chains, with concomitant formation of a 1,6-anhydrobond in the MurNAc residue.. Murein-degrading enzyme that degrades murein glycan strands and insoluble, high-molecular weight murein sacculi, with the concomitant formation of a 1,6-anhydromuramoyl product. Lytic transglycosylases (LTs) play an integral role in the metabolism of the peptidoglycan (PG) sacculus. Their lytic action creates space within the PG sacculus to allow for its expansion as well as for the insertion of various structures such as secretion systems and flagella. This Aliivibrio fischeri (strain ATCC 700601 / ES114) (Vibrio fischeri) protein is Membrane-bound lytic murein transglycosylase F.